The following is a 166-amino-acid chain: NAD(P)H-quinone oxidoreductase subunit I, chloroplastic (166 aa).

4Fe-4S ferredoxin-type domains lie at 55–84 (GRIH…VDWK) and 95–124 (LNYS…MTEE). Cys64, Cys67, Cys70, Cys74, Cys104, Cys107, Cys110, and Cys114 together coordinate [4Fe-4S] cluster.

This sequence belongs to the complex I 23 kDa subunit family. As to quaternary structure, NDH is composed of at least 16 different subunits, 5 of which are encoded in the nucleus. It depends on [4Fe-4S] cluster as a cofactor.

The protein resides in the plastid. The protein localises to the chloroplast thylakoid membrane. It catalyses the reaction a plastoquinone + NADH + (n+1) H(+)(in) = a plastoquinol + NAD(+) + n H(+)(out). It carries out the reaction a plastoquinone + NADPH + (n+1) H(+)(in) = a plastoquinol + NADP(+) + n H(+)(out). NDH shuttles electrons from NAD(P)H:plastoquinone, via FMN and iron-sulfur (Fe-S) centers, to quinones in the photosynthetic chain and possibly in a chloroplast respiratory chain. The immediate electron acceptor for the enzyme in this species is believed to be plastoquinone. Couples the redox reaction to proton translocation, and thus conserves the redox energy in a proton gradient. This chain is NAD(P)H-quinone oxidoreductase subunit I, chloroplastic, found in Lasianthaea macrocephala (Lipochaeta macrocephala).